The following is a 186-amino-acid chain: Small ribosomal subunit protein uS4 (186 aa).

The region spanning 106-170 (RRLQTIVYRK…SPLKDEDHPI (65 aa)) is the S4 RNA-binding domain. Positions 151-186 (EEEEVDYSPYSPLKDEDHPIRCEARGESPEETAAEE) are disordered. The span at 163 to 178 (LKDEDHPIRCEARGES) shows a compositional bias: basic and acidic residues.

It belongs to the universal ribosomal protein uS4 family. Part of the 30S ribosomal subunit. Contacts protein S5. The interaction surface between S4 and S5 is involved in control of translational fidelity.

In terms of biological role, one of the primary rRNA binding proteins, it binds directly to 16S rRNA where it nucleates assembly of the body of the 30S subunit. Functionally, with S5 and S12 plays an important role in translational accuracy. The protein is Small ribosomal subunit protein uS4 of Methanopyrus kandleri (strain AV19 / DSM 6324 / JCM 9639 / NBRC 100938).